A 188-amino-acid polypeptide reads, in one-letter code: dCTP deaminase (188 aa).

Residues 111 to 116, 135 to 137, Q156, Y170, and Q180 each bind dCTP; these read KSTYAR and TLE. Catalysis depends on E137, which acts as the Proton donor/acceptor.

It belongs to the dCTP deaminase family. Homotrimer.

The enzyme catalyses dCTP + H2O + H(+) = dUTP + NH4(+). The protein operates within pyrimidine metabolism; dUMP biosynthesis; dUMP from dCTP (dUTP route): step 1/2. Catalyzes the deamination of dCTP to dUTP. The protein is dCTP deaminase of Polaromonas sp. (strain JS666 / ATCC BAA-500).